We begin with the raw amino-acid sequence, 469 residues long: MSEWDYKIFWDEAVNQFKEELAFSIFSMWFLPSKYEKSTENTVYLSVPSKFFRDQMIHNYKNGIEKKLFELSGKKISIDFIIKPNTSEDLSKAENEGGNDKKEDAAKPSSAESKKKSVKTEGGRGQHPDLRPEYNFEDFVVGPNNNFGVNAAIAVSTNPGSAYNPFLIYGGVGLGKTHLMQAIGNKIWDTTKLKVIYVTAENFTNEFVECVQKKMMPAFKSKYRKADVLLIDDIHFFQGKVETQEELFHTFNELYEKNKQIVFTCDRPPAELKNLSQRLKSRFERGLNVDLQTPAYEIRYAILLKKMEKHSTKIPNEFIDMVAKNVSSNVRDLEAALTKLIAYTELTKKTMDEATAKNLLRDIFGSTRQRNVTIDLIQRTVADYFSISISDIKSKKRTKSFSFPRQIAMFLCREMTECSTTELGNDFGGRDHTTILHGCNKIEEQIAADPSLEKIIHELRNTIKENTNK.

Residues 1 to 83 form a domain I, interacts with DnaA modulators region; that stretch reads MSEWDYKIFW…KKISIDFIIK (83 aa). The segment at 83–128 is domain II; that stretch reads KPNTSEDLSKAENEGGNDKKEDAAKPSSAESKKKSVKTEGGRGQHP. A disordered region spans residues 89–131; sequence DLSKAENEGGNDKKEDAAKPSSAESKKKSVKTEGGRGQHPDLR. A domain III, AAA+ region region spans residues 129–344; the sequence is DLRPEYNFED…AALTKLIAYT (216 aa). Gly173, Gly175, Lys176, and Thr177 together coordinate ATP. The domain IV, binds dsDNA stretch occupies residues 345–469; that stretch reads ELTKKTMDEA…RNTIKENTNK (125 aa).

The protein belongs to the DnaA family. In terms of assembly, oligomerizes as a right-handed, spiral filament on DNA at oriC.

It localises to the cytoplasm. Its function is as follows. Plays an essential role in the initiation and regulation of chromosomal replication. ATP-DnaA binds to the origin of replication (oriC) to initiate formation of the DNA replication initiation complex once per cell cycle. Binds the DnaA box (a 9 base pair repeat at the origin) and separates the double-stranded (ds)DNA. Forms a right-handed helical filament on oriC DNA; dsDNA binds to the exterior of the filament while single-stranded (ss)DNA is stabiized in the filament's interior. The ATP-DnaA-oriC complex binds and stabilizes one strand of the AT-rich DNA unwinding element (DUE), permitting loading of DNA polymerase. After initiation quickly degrades to an ADP-DnaA complex that is not apt for DNA replication. Binds acidic phospholipids. The protein is Chromosomal replication initiator protein DnaA of Treponema denticola (strain ATCC 35405 / DSM 14222 / CIP 103919 / JCM 8153 / KCTC 15104).